We begin with the raw amino-acid sequence, 427 residues long: Glutamate-1-semialdehyde 2,1-aminomutase (427 aa).

Residue Lys265 is modified to N6-(pyridoxal phosphate)lysine.

It belongs to the class-III pyridoxal-phosphate-dependent aminotransferase family. HemL subfamily. Homodimer. Pyridoxal 5'-phosphate is required as a cofactor.

It localises to the cytoplasm. It carries out the reaction (S)-4-amino-5-oxopentanoate = 5-aminolevulinate. Its pathway is porphyrin-containing compound metabolism; protoporphyrin-IX biosynthesis; 5-aminolevulinate from L-glutamyl-tRNA(Glu): step 2/2. This is Glutamate-1-semialdehyde 2,1-aminomutase from Teredinibacter turnerae (strain ATCC 39867 / T7901).